A 926-amino-acid chain; its full sequence is Neurofilament medium polypeptide (926 aa).

A compositionally biased stretch (polar residues) spans 1 to 10 (MSYTLDSLGN). Disordered stretches follow at residues 1 to 51 (MSYT…VSSS) and 79 to 102 (QSSS…SNEK). S2 carries the N-acetylserine modification. The tract at residues 2–104 (SYTLDSLGNP…KLSRSNEKEQ (103 aa)) is head. The segment covering 21–44 (RSSFSRISGSPSSGFRSQSWSRGS) has biased composition (low complexity). S30 is modified (phosphoserine). Omega-N-methylarginine is present on R42. An O-linked (GlcNAc) threonine glycan is attached at T47. Position 99 is a phosphoserine (S99). The 312-residue stretch at 101 to 412 (EKEQIQGLND…KLLEGEETRF (312 aa)) folds into the IF rod domain. The tract at residues 105 to 136 (IQGLNDRFAGYIEKVHYLEQQNKEIEAEIQAL) is coil 1A. Positions 137–149 (RQKQASHAQLGDA) are linker 1. A coil 1B region spans residues 150–248 (YDQEIRELRA…EEEVADLLAQ (99 aa)). The residue at position 226 (S226) is a Phosphoserine. The linker 12 stretch occupies residues 249-265 (IQASHITVERKDYLKTD). Positions 266-287 (ISTALKEIRSQLESHSDQNMHQ) are coil 2A. Residues 288–291 (AEEW) are linker 2. A coil 2B region spans residues 292-412 (FKCRYAKLTE…KLLEGEETRF (121 aa)). Y320 carries the post-translational modification Phosphotyrosine. Phosphoserine is present on residues S346, S418, S430, S468, and S484. Residues 413 to 926 (STFAGSITGP…AIVKEVTQSD (514 aa)) are tail. The interval 487–860 (EEVKEEEAEE…EKKGGDKSEE (374 aa)) is disordered. Residues 490–507 (KEEEAEEKEEKEEAEEEV) show a composition bias toward acidic residues. The stretch at 512-516 (KSPVK) is repeat 1. Positions 512–698 (KSPVKATAPE…KSPAPKSPVE (187 aa)) are 17 X 5 AA approximate tandem repeats of K-S-P-[TVEA]-[AKETP]. At S513 the chain carries Phosphoserine. The segment covering 523-543 (KEEEGEKEEEEGQEEEEEEEE) has biased composition (acidic residues). A compositionally biased stretch (basic and acidic residues) spans 544-563 (AAKSDQAEEGGSEKEGSSEK). Phosphoserine occurs at positions 547, 555, 560, and 561. Over residues 564–584 (EEGEQEEEGETEAEGEGEEAA) the composition is skewed to acidic residues. T574 carries the phosphothreonine modification. Residues 585–619 (AEAKEEKKMEEKAEEVAPKEELAAEAKVEKPEKAK) show a composition bias toward basic and acidic residues. 16 tandem repeats follow at residues 619–623 (KSPVA), 624–628 (KSPTT), 629–633 (KSPTA), 634–638 (KSPEA), 639–643 (KSPEA), 644–648 (KSPTA), 649–653 (KSPTA), 654–658 (KSPVA), 659–663 (KSPTA), 664–668 (KSPEA), 669–673 (KSPEA), 674–678 (KSPTA), 679–683 (KSPTA), 684–688 (KSPAA), 689–693 (KSPAP), and 694–698 (KSPVE). Residue T628 is modified to Phosphothreonine. Residues S630, S635, and S640 each carry the phosphoserine modification. A Phosphothreonine modification is found at T647. S650 and S655 each carry phosphoserine. 2 positions are modified to phosphoserine: S665 and S670. Over residues 673–692 (AKSPTAKSPTAKSPAAKSPA) the composition is skewed to low complexity. T677 carries the post-translational modification Phosphothreonine. Phosphoserine is present on residues S680, S685, S690, S695, S727, S751, S757, S771, S831, and S847. Basic and acidic residues-rich tracts occupy residues 696–764 (PVEE…EEVP), 771–811 (SPEK…KEDI), and 826–838 (TKEK…EEKG). Residues 849–860 (GDEKKGGDKSEE) show a composition bias toward basic and acidic residues.

Forms heterodimers with NEFL; which can further hetero-oligomerize (in vitro). Forms heterodimers with INA (in vitro). In terms of processing, phosphorylated on a number of serine residues in the repeated K-S-P tripeptide motif. Phosphorylation of NFH may result in the formation of interfilament cross-links that are important in the maintenance of axonal caliber. Post-translationally, phosphorylation seems to play a major role in the functioning of the larger neurofilament polypeptides (NF-M and NF-H), the levels of phosphorylation being altered developmentally and coincidentally with a change in the neurofilament function. Phosphorylated in the head and rod regions by the PKC kinase PKN1, leading to the inhibition of polymerization.

It is found in the cytoplasm. The protein resides in the cytoskeleton. Its subcellular location is the cell projection. The protein localises to the axon. Neurofilaments usually contain three intermediate filament proteins: NEFL, NEFM, and NEFH which are involved in the maintenance of neuronal caliber. May additionally cooperate with the neuronal intermediate filament proteins PRPH and INA to form neuronal filamentous networks. This Bos taurus (Bovine) protein is Neurofilament medium polypeptide (NEFM).